The chain runs to 161 residues: MTSIVEALVPGGKANPGPPLGPALGPLGVNIKEVVEKINEKTRDYNGMQVPVKVIVDDKKNVEIEVGTPPTASLIMKELGIQKGSGNAGSEVVGNISISQVAKIARMKKEDVLSYDLKATMKEVMGTCVPMGVTVEGVEARDSQKALDQGKFDDLLAGEEW.

This sequence belongs to the universal ribosomal protein uL11 family. Part of the ribosomal stalk of the 50S ribosomal subunit. Interacts with L10 and the large rRNA to form the base of the stalk. L10 forms an elongated spine to which L12 dimers bind in a sequential fashion forming a multimeric L10(L12)X complex.

Its function is as follows. Forms part of the ribosomal stalk which helps the ribosome interact with GTP-bound translation factors. The polypeptide is Large ribosomal subunit protein uL11 (Methanosarcina barkeri (strain Fusaro / DSM 804)).